The primary structure comprises 238 residues: Probable transcriptional regulatory protein YcdB (238 aa).

It belongs to the TACO1 family. YeeN subfamily.

It localises to the cytoplasm. In Lactococcus lactis subsp. lactis (strain IL1403) (Streptococcus lactis), this protein is Probable transcriptional regulatory protein YcdB (ycdB).